We begin with the raw amino-acid sequence, 59 residues long: MAVQQNKKSRSRKGMRRSHDRVAVPAVVYCACGEPTAPHRACPSCGTYKGRQVTKQDNE.

A disordered region spans residues 1-20 (MAVQQNKKSRSRKGMRRSHD). Positions 7 to 19 (KKSRSRKGMRRSH) are enriched in basic residues.

Belongs to the bacterial ribosomal protein bL32 family.

The protein is Large ribosomal subunit protein bL32 of Nitratidesulfovibrio vulgaris (strain ATCC 29579 / DSM 644 / CCUG 34227 / NCIMB 8303 / VKM B-1760 / Hildenborough) (Desulfovibrio vulgaris).